The following is a 35-amino-acid chain: Thionin NsW2 (35 aa).

3 cysteine pairs are disulfide-bonded: Cys4/Cys32, Cys12/Cys30, and Cys16/Cys26.

Post-translationally, contains 4 disulfide bonds.

The protein resides in the secreted. Functionally, antimicrobial peptide disrupting membranes. Has antibacterial against Gram-positive bacteria S.aureus (MIC=6.5 uM) and B.subtilis (MIC=3.25 uM) but not against Gram-negative bacterium E.coli. Has antifungal activity against C.albicans (MIC=3.25 uM). This is Thionin NsW2 from Nigella sativa (Black cumin).